A 614-amino-acid chain; its full sequence is MERLEKRGQGLENFKKYNFEFYIIILFITILATFPFYRGNFHAGNDFAFNYARVMSTISALKDGQVIPQFDPNALSGFGYAWNEFYGPLPTYFISVIKFIVKSWSLSFSLFYSLCLFISGIFIFNFSSFLLKDHTNSKLFGLLAVALFTFSNSTYINLYYYANPSQPLALLFVILLFWGMNKMFNKRSFAAFLMVAFGAAGLPLSHTVTTICTLPFVLLYLLFLIIKKGNLKENIKIIGLGFLSVTSAIGLSAFFLFPLLENLKSGIYNVSNSDFSRSFGWNNIAYFQGKWEPLYKIEFSYYKFPSLLFVFIVLFIFIFSLINFKKTNAKYSLIFSCFSLVLVLMQLPIFPWKLFSIFTIVQDPARFSTLFGLFSALSLVLILPILLDKISGKTSYYLTIGLLVIFSILGFAEFRNRIQKGSQPLFASAQSLLNKTPFNYMENPDSIAIGEYLPQVIGSHNQPYEKTIQQFYKDKNVYGMRNQAMTYLSQRGKLPEGLAKSIQISDYSKKGSHVTFTATTGSKSASVEIPEIYYKGFIAFTKEGNKKIKLTSQISKNGFLEIKVPAKFSGKIYSYFAMSSATKYGVLLSLLTFVSLLIILITKTFIKRKLSKDK.

This is an uncharacterized protein from Lactococcus lactis subsp. cremoris (strain MG1363).